The following is an 890-amino-acid chain: Leucine--tRNA ligase (890 aa).

The 'HIGH' region signature appears at 48–58; it reads PYPSGKLHMGH. The 'KMSKS' region signature appears at 645–649; that stretch reads KMSKS. Lysine 648 is an ATP binding site.

This sequence belongs to the class-I aminoacyl-tRNA synthetase family.

The protein localises to the cytoplasm. It carries out the reaction tRNA(Leu) + L-leucine + ATP = L-leucyl-tRNA(Leu) + AMP + diphosphate. The sequence is that of Leucine--tRNA ligase from Polynucleobacter necessarius subsp. necessarius (strain STIR1).